The chain runs to 435 residues: 3-phosphoshikimate 1-carboxyvinyltransferase (435 aa).

Residues K15, S16, and R20 each coordinate 3-phosphoshikimate. Phosphoenolpyruvate is bound at residue K15. Residues G96 and R124 each contribute to the phosphoenolpyruvate site. Residues S169, Q171, T195, D319, and K346 each contribute to the 3-phosphoshikimate site. Q171 contributes to the phosphoenolpyruvate binding site. D319 serves as the catalytic Proton acceptor. Phosphoenolpyruvate is bound by residues R350 and R394.

This sequence belongs to the EPSP synthase family. As to quaternary structure, monomer.

The protein resides in the cytoplasm. It carries out the reaction 3-phosphoshikimate + phosphoenolpyruvate = 5-O-(1-carboxyvinyl)-3-phosphoshikimate + phosphate. It functions in the pathway metabolic intermediate biosynthesis; chorismate biosynthesis; chorismate from D-erythrose 4-phosphate and phosphoenolpyruvate: step 6/7. Its function is as follows. Catalyzes the transfer of the enolpyruvyl moiety of phosphoenolpyruvate (PEP) to the 5-hydroxyl of shikimate-3-phosphate (S3P) to produce enolpyruvyl shikimate-3-phosphate and inorganic phosphate. This Chloroherpeton thalassium (strain ATCC 35110 / GB-78) protein is 3-phosphoshikimate 1-carboxyvinyltransferase.